The primary structure comprises 706 residues: Lysophospholipase 2 (706 aa).

The N-terminal stretch at 1 to 19 is a signal peptide; the sequence is MQLRNILQASSLISGLSLA. The region spanning 36-588 is the PLA2c domain; the sequence is PCPSDDTSLV…ADYCWNGTLS (553 aa). Residues Asn-47, Asn-80, Asn-94, Asn-125, Asn-162, Asn-181, Asn-193, Asn-217, Asn-279, Asn-309, Asn-365, Asn-390, Asn-491, Asn-515, Asn-524, Asn-543, Asn-567, Asn-584, Asn-598, Asn-630, Asn-634, Asn-642, Asn-648, Asn-652, and Asn-658 are each glycosylated (N-linked (GlcNAc...) asparagine). The disordered stretch occupies residues 627-672; it reads TSGNTTSNSTTSTSSNVTSNSNSSSNTTLNSNSSSSSISSSTARSS. The GPI-anchor amidated asparagine moiety is linked to residue Asn-680. A propeptide spans 681-706 (removed in mature form); the sequence is AAAISYANTNTLMSLLGAITALFGLI.

The protein belongs to the lysophospholipase family. The GPI-anchor is attached to the protein in the endoplasmic reticulum and serves to target the protein to the cell surface. There, the glucosamine-inositol phospholipid moiety is cleaved off and the GPI-modified mannoprotein is covalently attached via its lipidless GPI glycan remnant to the 1,6-beta-glucan of the outer cell wall layer.

It is found in the secreted. The protein resides in the cell wall. The protein localises to the membrane. It catalyses the reaction a 1-acyl-sn-glycero-3-phosphocholine + H2O = sn-glycerol 3-phosphocholine + a fatty acid + H(+). The catalysed reaction is 1-hexadecanoyl-sn-glycero-3-phosphoethanolamine + H2O = sn-glycero-3-phosphoethanolamine + hexadecanoate + H(+). The enzyme catalyses 1-hexadecanoyl-sn-glycero-3-phosphocholine + H2O = sn-glycerol 3-phosphocholine + hexadecanoate + H(+). It carries out the reaction 1-hexadecanoyl-sn-glycero-3-phospho-L-serine + H2O = sn-glycero-3-phospho-L-serine + hexadecanoate + H(+). It catalyses the reaction 1,2-dihexadecanoyl-sn-glycero-3-phosphocholine + H2O = 1-hexadecanoyl-sn-glycero-3-phosphocholine + hexadecanoate + H(+). Sequentially removes both fatty acyl groups from diacylglycerophospholipids and therefore has both phospholipase A and lysophospholipase activities. However, it does not display transacylase activity. Substrate preference is phosphatidylserine &gt; phosphatidylinositol &gt; phosphatidylcholine &gt; phosphatidylethanolamine. The substrate specificity is pH- and ion-dependent. In contrast with activities observed at optimum pH 3.5, the order of substrate preference at pH 5.5 is phosphatidylserine = phosphatidylethanolamine &gt; phosphatidylcholine &gt; phosphatidylinositol. The sequence is that of Lysophospholipase 2 (PLB2) from Saccharomyces cerevisiae (strain ATCC 204508 / S288c) (Baker's yeast).